A 194-amino-acid chain; its full sequence is Coiled-coil domain-containing protein 184 (194 aa).

The stretch at 39–68 (GMKELMEHLKAQLQALFEDVRAMRGALDEQ) forms a coiled coil. Positions 101–176 (GLGVVGGKGS…LLGGDGPLVE (76 aa)) are disordered. Acidic residues predominate over residues 135 to 145 (PEDEEEEEEEK).

The chain is Coiled-coil domain-containing protein 184 (CCDC184) from Homo sapiens (Human).